Reading from the N-terminus, the 413-residue chain is Cell surface GPI-anchored protein ECM33 (413 aa).

Residues M1–A20 form the signal peptide. 11 N-linked (GlcNAc...) asparagine glycosylation sites follow: N93, N102, N172, N209, N222, N227, N279, N290, N306, N322, and N382. Positions Y347–G390 are disordered. A compositionally biased stretch (low complexity) spans S356–G390. G390 carries GPI-anchor amidated glycine lipidation. Positions A391–I413 are cleaved as a propeptide — removed in mature form.

Belongs to the SPS2 family.

The protein localises to the cell membrane. It is found in the secreted. It localises to the cell wall. Functionally, cell surface protein required for proper cell wall integrity and for the correct assembly of the mannoprotein outer layer of the cell wall. This is Cell surface GPI-anchored protein ECM33 (ECM331) from Candida albicans (strain SC5314 / ATCC MYA-2876) (Yeast).